The chain runs to 291 residues: N-acetylmannosamine kinase (291 aa).

Residues 5–12 (AIDIGGTK) and 132–139 (GVGGGVVS) each bind ATP. Zn(2+) contacts are provided by H156, C166, C168, and C173.

Belongs to the ROK (NagC/XylR) family. NanK subfamily. In terms of assembly, homodimer.

The enzyme catalyses an N-acyl-D-mannosamine + ATP = an N-acyl-D-mannosamine 6-phosphate + ADP + H(+). The protein operates within amino-sugar metabolism; N-acetylneuraminate degradation; D-fructose 6-phosphate from N-acetylneuraminate: step 2/5. Its function is as follows. Catalyzes the phosphorylation of N-acetylmannosamine (ManNAc) to ManNAc-6-P. This is N-acetylmannosamine kinase from Escherichia coli O6:K15:H31 (strain 536 / UPEC).